The sequence spans 521 residues: Cholesterol side-chain cleavage enzyme, mitochondrial (521 aa).

The N-terminal 39 residues, 1–39 (MLAKGLPPRSVLVKGCQTFLSAPKERLGHLRVPTSEGAG), are a transit peptide targeting the mitochondrion. C462 contacts heme.

The protein belongs to the cytochrome P450 family. Interacts with FDX1/adrenodoxin. It depends on heme as a cofactor.

The protein resides in the mitochondrion inner membrane. The catalysed reaction is 6 reduced [adrenodoxin] + cholesterol + 3 O2 + 6 H(+) = 4-methylpentanal + pregnenolone + 6 oxidized [adrenodoxin] + 4 H2O. The enzyme catalyses 2 reduced [adrenodoxin] + cholesterol + O2 + 2 H(+) = (22R)-hydroxycholesterol + 2 oxidized [adrenodoxin] + H2O. It catalyses the reaction (22R)-hydroxycholesterol + 2 reduced [adrenodoxin] + O2 + 2 H(+) = (20R,22R)-20,22-dihydroxycholesterol + 2 oxidized [adrenodoxin] + H2O. It carries out the reaction (20R,22R)-20,22-dihydroxycholesterol + 2 reduced [adrenodoxin] + O2 + 2 H(+) = 4-methylpentanal + pregnenolone + 2 oxidized [adrenodoxin] + 2 H2O. It participates in lipid metabolism; C21-steroid hormone metabolism. It functions in the pathway steroid metabolism; cholesterol metabolism. A cytochrome P450 monooxygenase that catalyzes the side-chain hydroxylation and cleavage of cholesterol to pregnenolone, the precursor of most steroid hormones. Catalyzes three sequential oxidation reactions of cholesterol, namely the hydroxylation at C22 followed with the hydroxylation at C20 to yield 20R,22R-hydroxycholesterol that is further cleaved between C20 and C22 to yield the C21-steroid pregnenolone and 4-methylpentanal. Mechanistically, uses molecular oxygen inserting one oxygen atom into a substrate and reducing the second into a water molecule. Two electrons are provided by NADPH via a two-protein mitochondrial transfer system comprising flavoprotein FDXR (adrenodoxin/ferredoxin reductase) and nonheme iron-sulfur protein FDX1 or FDX2 (adrenodoxin/ferredoxin). The protein is Cholesterol side-chain cleavage enzyme, mitochondrial (CYP11A1) of Macaca fascicularis (Crab-eating macaque).